Consider the following 514-residue polypeptide: 2,3-bisphosphoglycerate-independent phosphoglycerate mutase (514 aa).

Mn(2+)-binding residues include D15 and S65. S65 serves as the catalytic Phosphoserine intermediate. Residues H126, 156–157 (RD), R188, R194, 261–264 (RADR), and K335 each bind substrate. Residues D403, H407, D444, H445, and H462 each contribute to the Mn(2+) site.

Belongs to the BPG-independent phosphoglycerate mutase family. In terms of assembly, monomer. It depends on Mn(2+) as a cofactor.

It carries out the reaction (2R)-2-phosphoglycerate = (2R)-3-phosphoglycerate. Its pathway is carbohydrate degradation; glycolysis; pyruvate from D-glyceraldehyde 3-phosphate: step 3/5. In terms of biological role, catalyzes the interconversion of 2-phosphoglycerate and 3-phosphoglycerate. The polypeptide is 2,3-bisphosphoglycerate-independent phosphoglycerate mutase (Syntrophotalea carbinolica (strain DSM 2380 / NBRC 103641 / GraBd1) (Pelobacter carbinolicus)).